The sequence spans 367 residues: Aminomethyltransferase (367 aa).

It belongs to the GcvT family. The glycine cleavage system is composed of four proteins: P, T, L and H.

The enzyme catalyses N(6)-[(R)-S(8)-aminomethyldihydrolipoyl]-L-lysyl-[protein] + (6S)-5,6,7,8-tetrahydrofolate = N(6)-[(R)-dihydrolipoyl]-L-lysyl-[protein] + (6R)-5,10-methylene-5,6,7,8-tetrahydrofolate + NH4(+). Functionally, the glycine cleavage system catalyzes the degradation of glycine. The polypeptide is Aminomethyltransferase (Lysinibacillus sphaericus (strain C3-41)).